We begin with the raw amino-acid sequence, 84 residues long: Three-finger toxin MALT0070C (84 aa).

The first 21 residues, 1-21 (MKTLLLTLVVVTIVCLDLGYT), serve as a signal peptide directing secretion. 4 cysteine pairs are disulfide-bonded: cysteine 24-cysteine 43, cysteine 36-cysteine 60, cysteine 64-cysteine 71, and cysteine 72-cysteine 77.

The protein belongs to the three-finger toxin family. Short-chain subfamily. As to expression, expressed by the venom gland.

It is found in the secreted. In Micrurus altirostris (Uruguayan coral snake), this protein is Three-finger toxin MALT0070C.